A 245-amino-acid chain; its full sequence is 8-amino-3,8-dideoxy-manno-octulosonate cytidylyltransferase (245 aa).

This sequence belongs to the KdsB family.

It is found in the cytoplasm. The catalysed reaction is 8-amino-3,8-dideoxy-alpha-D-manno-octulosonate + CTP = CMP-8-amino-3,8-dideoxy-alpha-D-manno-oct-2-ulosonate + diphosphate. It participates in bacterial outer membrane biogenesis; lipopolysaccharide biosynthesis. In terms of biological role, activates KDO8N (a required 8-carbon sugar) for incorporation into bacterial lipopolysaccharide in the Shewanella genus. This is 8-amino-3,8-dideoxy-manno-octulosonate cytidylyltransferase from Shewanella putrefaciens (strain CN-32 / ATCC BAA-453).